The chain runs to 755 residues: Anaphase-promoting complex subunit 5 (755 aa).

A Phosphoserine modification is found at serine 195. TPR repeat units lie at residues 209–249 (QKQA…FNPD), 250–300 (FAEA…GRSL), 301–337 (RYAA…SNDH), 338–378 (VCLQ…YLAS), 379–418 (LGIQ…SELI), 419–466 (DISI…TESF), 467–500 (AVAL…FPPN), 501–540 (SQHA…ALNS), 541–580 (IEGV…TEMV), 581–620 (ISVL…QYLA), 621–660 (SETV…ILDK), 661–696 (GRAM…NLNE), and 697–736 (AKNY…CAML). Threonine 232 carries the phosphothreonine modification.

It belongs to the APC5 family. The mammalian APC/C is composed at least of 14 distinct subunits ANAPC1, ANAPC2, CDC27/APC3, ANAPC4, ANAPC5, CDC16/APC6, ANAPC7, CDC23/APC8, ANAPC10, ANAPC11, CDC26/APC12, ANAPC13, ANAPC15 and ANAPC16 that assemble into a complex of at least 19 chains with a combined molecular mass of around 1.2 MDa; APC/C interacts with FZR1 and FBXO5.

It localises to the nucleus. It is found in the cytoplasm. The protein resides in the cytoskeleton. The protein localises to the spindle. Its pathway is protein modification; protein ubiquitination. In terms of biological role, component of the anaphase promoting complex/cyclosome (APC/C), a cell cycle-regulated E3 ubiquitin ligase that controls progression through mitosis and the G1 phase of the cell cycle. The APC/C complex acts by mediating ubiquitination and subsequent degradation of target proteins: it mainly mediates the formation of 'Lys-11'-linked polyubiquitin chains and, to a lower extent, the formation of 'Lys-48'- and 'Lys-63'-linked polyubiquitin chains. The APC/C complex catalyzes assembly of branched 'Lys-11'-/'Lys-48'-linked branched ubiquitin chains on target proteins. This is Anaphase-promoting complex subunit 5 (ANAPC5) from Homo sapiens (Human).